The following is a 200-amino-acid chain: ATP-dependent Clp protease proteolytic subunit 2 (200 aa).

The active-site Nucleophile is the serine 99. The active site involves histidine 124.

This sequence belongs to the peptidase S14 family. As to quaternary structure, fourteen ClpP subunits assemble into 2 heptameric rings which stack back to back to give a disk-like structure with a central cavity, resembling the structure of eukaryotic proteasomes.

The protein resides in the cytoplasm. It catalyses the reaction Hydrolysis of proteins to small peptides in the presence of ATP and magnesium. alpha-casein is the usual test substrate. In the absence of ATP, only oligopeptides shorter than five residues are hydrolyzed (such as succinyl-Leu-Tyr-|-NHMec, and Leu-Tyr-Leu-|-Tyr-Trp, in which cleavage of the -Tyr-|-Leu- and -Tyr-|-Trp bonds also occurs).. Its function is as follows. Cleaves peptides in various proteins in a process that requires ATP hydrolysis. Has a chymotrypsin-like activity. Plays a major role in the degradation of misfolded proteins. The sequence is that of ATP-dependent Clp protease proteolytic subunit 2 from Treponema denticola (strain ATCC 35405 / DSM 14222 / CIP 103919 / JCM 8153 / KCTC 15104).